Reading from the N-terminus, the 416-residue chain is Pectin acetylesterase 3 (416 aa).

The first 25 residues, 1–25, serve as a signal peptide directing secretion; sequence MKSVLRIAAAIFWLWLFIVLGVIGS. Asn131 carries N-linked (GlcNAc...) asparagine glycosylation. Active-site charge relay system residues include Ser198 and Asp294. Asn324 is a glycosylation site (N-linked (GlcNAc...) asparagine). His361 serves as the catalytic Charge relay system.

It belongs to the pectinacetylesterase family.

The protein localises to the secreted. It localises to the cell wall. Hydrolyzes acetyl esters in homogalacturonan regions of pectin. In type I primary cell wall, galacturonic acid residues of pectin can be acetylated at the O-2 and O-3 positions. Decreasing the degree of acetylation of pectin gels in vitro alters their physical properties. The sequence is that of Pectin acetylesterase 3 from Arabidopsis thaliana (Mouse-ear cress).